The following is a 441-amino-acid chain: DILAAFRVTPQPGVPPEEAGAAVAAESSTGTWTTVWTDGLTSLDRYKGRCYHIDAVPGEEDQFIAYVAYPLDLFEEGSVTNMLTSIVGNVFGFKALRALRLEDLRIPPAYVKTFQGPPHGIQVERDKLNKYGRPLLGCTIKPKLGLSAKNYGRAVYECLRGGLDFTKDDENVNSQPFMRWRDRFLFCAEAIFKSQAETGEIKGHYLNATAGTCEEMYKRAIFARELGVPIVMHDYLTGGFTANTSLAHYCRDNGLLLHIHXAMHAVIDRQKNHGMHFRVLAKALRMSGGDHIHAGTVVGKLEGERDITLGFVDLLRDDFIEKDRSRGIYFTQDWVSLPGVLXVASGGIHVWHMPALTEIFGDDSVLQFGGGTLGHPWGNAPGAVANRVALEACVQARNEGRDLAVEGNEIIREASKWSPELAAACEVWKEIRFNFKAVDTL.

Positions 89 and 139 each coordinate substrate. K141 serves as the catalytic Proton acceptor. Residue K143 participates in substrate binding. The Mg(2+) site is built by K167, D169, and E170. Residue K167 is modified to N6-carboxylysine. H260 functions as the Proton acceptor in the catalytic mechanism. 3 residues coordinate substrate: X261, H293, and S345.

The protein belongs to the RuBisCO large chain family. Type I subfamily. Heterohexadecamer of 8 large chains and 8 small chains; disulfide-linked. The disulfide link is formed within the large subunit homodimers. Mg(2+) is required as a cofactor. Post-translationally, the disulfide bond which can form in the large chain dimeric partners within the hexadecamer appears to be associated with oxidative stress and protein turnover.

It is found in the plastid. The protein resides in the chloroplast. It carries out the reaction 2 (2R)-3-phosphoglycerate + 2 H(+) = D-ribulose 1,5-bisphosphate + CO2 + H2O. The enzyme catalyses D-ribulose 1,5-bisphosphate + O2 = 2-phosphoglycolate + (2R)-3-phosphoglycerate + 2 H(+). Functionally, ruBisCO catalyzes two reactions: the carboxylation of D-ribulose 1,5-bisphosphate, the primary event in carbon dioxide fixation, as well as the oxidative fragmentation of the pentose substrate in the photorespiration process. Both reactions occur simultaneously and in competition at the same active site. This Apocynum cannabinum (Hemp dogbane) protein is Ribulose bisphosphate carboxylase large chain.